Consider the following 672-residue polypeptide: tRNA 5-methylaminomethyl-2-thiouridine biosynthesis bifunctional protein MnmC (672 aa).

The segment at 1–235 (MTRVLEPAEP…KRDMTVARFA (235 aa)) is tRNA (mnm(5)s(2)U34)-methyltransferase. An FAD-dependent cmnm(5)s(2)U34 oxidoreductase region spans residues 259 to 672 (IGAGLAGCAV…SAGPGVDAAG (414 aa)).

The protein in the N-terminal section; belongs to the methyltransferase superfamily. tRNA (mnm(5)s(2)U34)-methyltransferase family. In the C-terminal section; belongs to the DAO family. Requires FAD as cofactor.

The protein resides in the cytoplasm. It catalyses the reaction 5-aminomethyl-2-thiouridine(34) in tRNA + S-adenosyl-L-methionine = 5-methylaminomethyl-2-thiouridine(34) in tRNA + S-adenosyl-L-homocysteine + H(+). In terms of biological role, catalyzes the last two steps in the biosynthesis of 5-methylaminomethyl-2-thiouridine (mnm(5)s(2)U) at the wobble position (U34) in tRNA. Catalyzes the FAD-dependent demodification of cmnm(5)s(2)U34 to nm(5)s(2)U34, followed by the transfer of a methyl group from S-adenosyl-L-methionine to nm(5)s(2)U34, to form mnm(5)s(2)U34. This chain is tRNA 5-methylaminomethyl-2-thiouridine biosynthesis bifunctional protein MnmC, found in Cupriavidus metallidurans (strain ATCC 43123 / DSM 2839 / NBRC 102507 / CH34) (Ralstonia metallidurans).